An 848-amino-acid chain; its full sequence is Adenylate cyclase (848 aa).

The interval methionine 1 to leucine 535 is catalytic. The regulatory stretch occupies residues lysine 541–serine 848. At histidine 609 the chain carries Phosphohistidine; by CRR.

Belongs to the adenylyl cyclase class-1 family.

The protein localises to the cytoplasm. The catalysed reaction is ATP = 3',5'-cyclic AMP + diphosphate. The regulatory domain is involved in the regulation of cyclase activity by the carbon source. Activated by the PTS system, glucose-specific IIA component (CRR). In terms of biological role, catalyzes the formation of the second messenger cAMP from ATP. Its transcript is probably degraded by endoribonuclease LS (rnlA), decreasing cAMP levels and the negative regulator Crp-cAMP, which then induces its own transcription again. This chain is Adenylate cyclase (cyaA), found in Escherichia coli (strain K12).